A 100-amino-acid chain; its full sequence is Small ribosomal subunit protein bS6 (100 aa).

It belongs to the bacterial ribosomal protein bS6 family.

Its function is as follows. Binds together with bS18 to 16S ribosomal RNA. This is Small ribosomal subunit protein bS6 from Tropheryma whipplei (strain TW08/27) (Whipple's bacillus).